The sequence spans 239 residues: Probable transcriptional regulatory protein BBR47_14810 (239 aa).

Belongs to the TACO1 family. YeeN subfamily.

Its subcellular location is the cytoplasm. In Brevibacillus brevis (strain 47 / JCM 6285 / NBRC 100599), this protein is Probable transcriptional regulatory protein BBR47_14810.